A 287-amino-acid polypeptide reads, in one-letter code: Nucleotide-binding protein HEAR2885 (287 aa).

An ATP-binding site is contributed by 8 to 15 (GISGSGKS). 57–60 (DVRS) lines the GTP pocket.

This sequence belongs to the RapZ-like family.

Its function is as follows. Displays ATPase and GTPase activities. In Herminiimonas arsenicoxydans, this protein is Nucleotide-binding protein HEAR2885.